The primary structure comprises 432 residues: MNFTKSEALHKEALEHIVGGVNSPSRSFKAVGGGAPVAMERGKGAYFWDVDGNKYIDYLAAYGPIITGHAHPHITKAITTAAENGVLYGTPTALEVKFAKMLKEAMPALDKVRFVNSGTEAVMTTIRVARAYTGRTKIMKFAGCYHGHSDLVLVAAGSGPSTLGTPDSAGVPQSIAQEVITVPFNNVETLKEALDKWGHEVAAILVEPIVGNFGIVEPKPGFLEKVNELVHEAGALVIYDEVITAFRFMYGGAQDLLGVTPDLTALGKVIGGGLPIGAYGGKKEIMEQVAPLGPAYQAGTMAGNPASMASGIACLEVLQQEGLYEKLDELGAMLEKGILEQAAKHNIDITLNRLKGALTVYFTTNTIEDYDAAQDTDGEMFGKFFKLMLQEGVNLAPSKYEAWFLTTEHTKEDIEYTIEAVGRAFAALADNK.

N6-(pyridoxal phosphate)lysine is present on Lys-268.

It belongs to the class-III pyridoxal-phosphate-dependent aminotransferase family. HemL subfamily. As to quaternary structure, homodimer. It depends on pyridoxal 5'-phosphate as a cofactor.

The protein resides in the cytoplasm. It catalyses the reaction (S)-4-amino-5-oxopentanoate = 5-aminolevulinate. It functions in the pathway porphyrin-containing compound metabolism; protoporphyrin-IX biosynthesis; 5-aminolevulinate from L-glutamyl-tRNA(Glu): step 2/2. The polypeptide is Glutamate-1-semialdehyde 2,1-aminomutase 1 (Bacillus cereus (strain B4264)).